We begin with the raw amino-acid sequence, 841 residues long: Protein translocase subunit SecA (841 aa).

ATP is bound by residues 79-80 (MF), Gln-85, 103-107 (GEGKT), and Asp-492. Positions 786 to 813 (REEVVQGQTTAHQPQEGDDNKKAKKAPV) are disordered. Positions 825, 827, 836, and 837 each coordinate Zn(2+).

The protein belongs to the SecA family. Part of the essential Sec protein translocation apparatus which comprises SecA, SecYEG and auxiliary proteins SecDF. Other proteins may be involved. Monomer and many different homodimers can be isolated, some of which are not formed in the presence of a synthetic signal peptide. A single SecA monomer interacts with SecY in the channel. Only shows some colocalization with FloA or FloT membrane assemblies. Zn(2+) serves as cofactor.

It is found in the cell membrane. The protein localises to the cytoplasm. It localises to the membrane raft. The catalysed reaction is ATP + H2O + cellular proteinSide 1 = ADP + phosphate + cellular proteinSide 2.. Its function is as follows. Part of the Sec protein translocase complex. Interacts with the SecYEG preprotein conducting channel. Has a central role in coupling the hydrolysis of ATP to the transfer of proteins into and across the cell membrane, serving as an ATP-driven molecular motor driving the stepwise translocation of polypeptide chains across the membrane. This is Protein translocase subunit SecA from Bacillus subtilis (strain 168).